The sequence spans 471 residues: Lincomycin resistance protein LmrB (471 aa).

The next 13 helical transmembrane spans lie at 15–34 (PIIA…ETAL), 55–77 (LTTG…LQWF), 82–104 (LFFT…PTFA), 111–131 (VVQA…ILLI), 141–163 (MGMI…GLIL), 170–187 (WIFW…LFGM), 202–224 (DILS…SSAG), 231–253 (ATVL…RQLT), 268–290 (MFTL…MILL), 297–319 (SLAL…NGLM), 329–351 (AYGP…FFLT), 358–380 (SALT…MMPA), and 445–467 (GIQN…SLFI).

The protein belongs to the major facilitator superfamily. EmrB family.

It is found in the cell membrane. Proton-dependent transporter. May mediate the efflux of lincomycin. This is Lincomycin resistance protein LmrB (lmrB) from Listeria innocua serovar 6a (strain ATCC BAA-680 / CLIP 11262).